We begin with the raw amino-acid sequence, 220 residues long: Pyridoxine/pyridoxamine 5'-phosphate oxidase (220 aa).

FMN-binding positions include 49 to 54 (RMVLLK), 68 to 69 (YT), K75, and Q97. Residue K54 coordinates substrate. Substrate-binding residues include Y115, R119, and S123. FMN-binding positions include 132–133 (QS) and W176. 182–184 (RLH) contributes to the substrate binding site. Residue R186 participates in FMN binding.

It belongs to the pyridoxamine 5'-phosphate oxidase family. Homodimer. FMN serves as cofactor.

It carries out the reaction pyridoxamine 5'-phosphate + O2 + H2O = pyridoxal 5'-phosphate + H2O2 + NH4(+). The enzyme catalyses pyridoxine 5'-phosphate + O2 = pyridoxal 5'-phosphate + H2O2. The protein operates within cofactor metabolism; pyridoxal 5'-phosphate salvage; pyridoxal 5'-phosphate from pyridoxamine 5'-phosphate: step 1/1. It functions in the pathway cofactor metabolism; pyridoxal 5'-phosphate salvage; pyridoxal 5'-phosphate from pyridoxine 5'-phosphate: step 1/1. Functionally, catalyzes the oxidation of either pyridoxine 5'-phosphate (PNP) or pyridoxamine 5'-phosphate (PMP) into pyridoxal 5'-phosphate (PLP). This chain is Pyridoxine/pyridoxamine 5'-phosphate oxidase, found in Paracoccus denitrificans (strain Pd 1222).